The primary structure comprises 356 residues: UDP-N-acetylglucosamine--N-acetylmuramyl-(pentapeptide) pyrophosphoryl-undecaprenol N-acetylglucosamine transferase (356 aa).

UDP-N-acetyl-alpha-D-glucosamine contacts are provided by residues 10–12 (TAG), Asn-123, Arg-159, Ser-193, Ile-240, and Gln-284.

The protein belongs to the glycosyltransferase 28 family. MurG subfamily.

The protein resides in the cell membrane. It carries out the reaction di-trans,octa-cis-undecaprenyl diphospho-N-acetyl-alpha-D-muramoyl-L-alanyl-D-glutamyl-meso-2,6-diaminopimeloyl-D-alanyl-D-alanine + UDP-N-acetyl-alpha-D-glucosamine = di-trans,octa-cis-undecaprenyl diphospho-[N-acetyl-alpha-D-glucosaminyl-(1-&gt;4)]-N-acetyl-alpha-D-muramoyl-L-alanyl-D-glutamyl-meso-2,6-diaminopimeloyl-D-alanyl-D-alanine + UDP + H(+). It participates in cell wall biogenesis; peptidoglycan biosynthesis. Functionally, cell wall formation. Catalyzes the transfer of a GlcNAc subunit on undecaprenyl-pyrophosphoryl-MurNAc-pentapeptide (lipid intermediate I) to form undecaprenyl-pyrophosphoryl-MurNAc-(pentapeptide)GlcNAc (lipid intermediate II). In Corynebacterium glutamicum (strain R), this protein is UDP-N-acetylglucosamine--N-acetylmuramyl-(pentapeptide) pyrophosphoryl-undecaprenol N-acetylglucosamine transferase.